Consider the following 150-residue polypeptide: MNVILLDKIANLGNLGDQVVVKAGYARNYLLPQGKAVVANESNVKVFEARRAELEAKLAAELAAANQRAEKITALEAVVIASKAGDEGKLFGSVGNRDIADAVTAAGVELAKSEVRLPLGALRTTGDFEVEVQLHTEVKAVVKVSIVAEA.

This sequence belongs to the bacterial ribosomal protein bL9 family.

In terms of biological role, binds to the 23S rRNA. The protein is Large ribosomal subunit protein bL9 of Shewanella putrefaciens (strain CN-32 / ATCC BAA-453).